We begin with the raw amino-acid sequence, 330 residues long: ADP-L-glycero-D-manno-heptose-6-epimerase (330 aa).

NADP(+) is bound by residues 11–12 (FI), 32–33 (DN), K39, K54, 75–79 (EGACS), and N92. Y139 serves as the catalytic Proton acceptor. Position 143 (K143) interacts with NADP(+). N168 serves as a coordination point for substrate. NADP(+) contacts are provided by V169 and K177. The Proton acceptor role is filled by K177. Substrate is bound by residues R179, H186, 200 to 203 (FGEY), R213, and Y292.

Belongs to the NAD(P)-dependent epimerase/dehydratase family. HldD subfamily. In terms of assembly, homopentamer. The cofactor is NADP(+).

It carries out the reaction ADP-D-glycero-beta-D-manno-heptose = ADP-L-glycero-beta-D-manno-heptose. It functions in the pathway nucleotide-sugar biosynthesis; ADP-L-glycero-beta-D-manno-heptose biosynthesis; ADP-L-glycero-beta-D-manno-heptose from D-glycero-beta-D-manno-heptose 7-phosphate: step 4/4. Catalyzes the interconversion between ADP-D-glycero-beta-D-manno-heptose and ADP-L-glycero-beta-D-manno-heptose via an epimerization at carbon 6 of the heptose. The protein is ADP-L-glycero-D-manno-heptose-6-epimerase of Burkholderia vietnamiensis (strain G4 / LMG 22486) (Burkholderia cepacia (strain R1808)).